The sequence spans 366 residues: MQVKDQLSSLQPYKPGKSPEQMKEVYGDHAFVKLASNENPFGCSPRVLDELQKSWLDHALYPDGGATTLRQTIANKLQVQMEQVLCGSGLDEVIQIISRAALKAGDNIVTAGATFPQYRHHAIIEGCEVKEVPLNNGVYDLDEISSAVNNNTKIVWICNPNNPTGTYVNDRKLTQFIEGISENTLIVIDEAYYEYVTAKDFPETLPLLEKHKNILVLRTFSKAYGLASFRVGYAIGQEELIEKLNVVRLPFNVSSLAQKAATIAFGDDEFIEEIVRVNTEGLQQYESFCKENDIPFYPSQTNFIFLPVENAGEIYEACAHAGFIIRPFPNGVRITVGTREQNEGVISVLQQHFENKKRKSRDEANA.

Over residues 1-11 (MQVKDQLSSLQ) the composition is skewed to polar residues. The tract at residues 1 to 21 (MQVKDQLSSLQPYKPGKSPEQ) is disordered. Residue Lys-222 is modified to N6-(pyridoxal phosphate)lysine.

Belongs to the class-II pyridoxal-phosphate-dependent aminotransferase family. Histidinol-phosphate aminotransferase subfamily. Homodimer. Pyridoxal 5'-phosphate is required as a cofactor.

It catalyses the reaction L-histidinol phosphate + 2-oxoglutarate = 3-(imidazol-4-yl)-2-oxopropyl phosphate + L-glutamate. It participates in amino-acid biosynthesis; L-histidine biosynthesis; L-histidine from 5-phospho-alpha-D-ribose 1-diphosphate: step 7/9. This is Histidinol-phosphate aminotransferase 2 from Bacillus cereus (strain ATCC 10987 / NRS 248).